The primary structure comprises 391 residues: Ferrochelatase (391 aa).

Fe cation-binding residues include histidine 196 and glutamate 281.

Belongs to the ferrochelatase family.

It localises to the cytoplasm. It carries out the reaction heme b + 2 H(+) = protoporphyrin IX + Fe(2+). It functions in the pathway porphyrin-containing compound metabolism; protoheme biosynthesis; protoheme from protoporphyrin-IX: step 1/1. Catalyzes the ferrous insertion into protoporphyrin IX. The protein is Ferrochelatase of Prochlorococcus marinus (strain MIT 9301).